The following is a 338-amino-acid chain: Heat shock factor 2-binding protein (338 aa).

Residues 1–20 (MAATVGDGSGTEEACRNMES) form a disordered region. A coiled-coil region spans residues 12 to 126 (EEACRNMESK…LLQQAEYCTQ (115 aa)). The interval 18–55 (MESKEEFVKVRKKDLERLTTEVMQIRDFLPRILNGELL) is interaction with BRME1. Positions 87–338 (ARLETAQADS…EDLRALDCNV (252 aa)) are interaction with BRCA2.

Interacts (via C-terminus) with BNC1. Associates with HSF2. The interaction seems to occur between the trimerization domain of HSF2 and the N-terminal hydrophilic region of HSF2BP. Interacts (via N-terminus) with BRME1. Interacts with BRCA2 and BRME1; the interactions are direct and allow the formation of a ternary complex. The complex BRME1:HSF2BP:BRCA2 interacts with SPATA22, MEIOB and RAD51. Post-translationally, sumoylated by UBE2I in response to MEKK1-mediated stimuli. As to expression, expressed in testis and, to a lesser extent, in lung and muscle.

It is found in the cytoplasm. It localises to the chromosome. Its function is as follows. Meiotic recombination factor component of recombination bridges involved in meiotic double-strand break repair. Modulates the localization of recombinases DMC1:RAD51 to meiotic double-strand break (DSB) sites through the interaction with BRCA2 and its recruitment during meiotic recombination. Indispensable for the DSB repair, homologous synapsis, and crossover formation that are needed for progression past metaphase I, is essential for spermatogenesis and male fertility. Required for proper recombinase recruitment in female meiosis. Inhibits BNC1 transcriptional activity during spermatogenesis, probably by sequestering it in the cytoplasm. May be involved in modulating HSF2 activation in testis. The polypeptide is Heat shock factor 2-binding protein (Mus musculus (Mouse)).